We begin with the raw amino-acid sequence, 98 residues long: Small ribosomal subunit protein eS24 (98 aa).

A disordered region spans residues 76-98; sequence GRQRTERSYLLNRGEPKKEEEEA. Residues 89 to 98 show a composition bias toward basic and acidic residues; it reads GEPKKEEEEA.

The protein belongs to the eukaryotic ribosomal protein eS24 family.

The polypeptide is Small ribosomal subunit protein eS24 (Methanosphaerula palustris (strain ATCC BAA-1556 / DSM 19958 / E1-9c)).